A 530-amino-acid chain; its full sequence is 2,3-bisphosphoglycerate-independent phosphoglycerate mutase (530 aa).

Asp15 and Ser65 together coordinate Mn(2+). The active-site Phosphoserine intermediate is Ser65. Residues His126, 155-156, Arg187, Arg193, 257-260, and Lys330 contribute to the substrate site; these read RD and RPDR. Residues Asp397, His401, Asp438, His439, and His456 each coordinate Mn(2+).

It belongs to the BPG-independent phosphoglycerate mutase family. Monomer. Requires Mn(2+) as cofactor.

It catalyses the reaction (2R)-2-phosphoglycerate = (2R)-3-phosphoglycerate. It participates in carbohydrate degradation; glycolysis; pyruvate from D-glyceraldehyde 3-phosphate: step 3/5. In terms of biological role, catalyzes the interconversion of 2-phosphoglycerate and 3-phosphoglycerate. This is 2,3-bisphosphoglycerate-independent phosphoglycerate mutase from Synechococcus sp. (strain JA-3-3Ab) (Cyanobacteria bacterium Yellowstone A-Prime).